We begin with the raw amino-acid sequence, 187 residues long: Elongation factor P (187 aa).

Belongs to the elongation factor P family.

Its subcellular location is the cytoplasm. It functions in the pathway protein biosynthesis; polypeptide chain elongation. Its function is as follows. Involved in peptide bond synthesis. Stimulates efficient translation and peptide-bond synthesis on native or reconstituted 70S ribosomes in vitro. Probably functions indirectly by altering the affinity of the ribosome for aminoacyl-tRNA, thus increasing their reactivity as acceptors for peptidyl transferase. In Desulfosudis oleivorans (strain DSM 6200 / JCM 39069 / Hxd3) (Desulfococcus oleovorans), this protein is Elongation factor P.